The following is a 358-amino-acid chain: Arginase (358 aa).

Mn(2+) is bound by residues His146, Asp174, His176, and Asp178. Residues 176–180 (HADIN), 187–189 (SGN), and Asp233 each bind substrate. Mn(2+) is bound by residues Asp280 and Asp282. Substrate-binding residues include Thr294 and Glu325.

This sequence belongs to the arginase family. Homohexamer. The cofactor is Mn(2+).

Its subcellular location is the cytoplasm. It carries out the reaction L-arginine + H2O = urea + L-ornithine. It functions in the pathway nitrogen metabolism; urea cycle; L-ornithine and urea from L-arginine: step 1/1. This is Arginase (aga-1) from Neurospora crassa (strain ATCC 24698 / 74-OR23-1A / CBS 708.71 / DSM 1257 / FGSC 987).